The primary structure comprises 292 residues: Tetratricopeptide repeat protein 1 (292 aa).

2 stretches are compositionally biased toward basic and acidic residues: residues 1–12 (MEEKSEDCKVPE) and 47–64 (KAAEAHPQDDHVEEECFH). Positions 1 to 125 (MEEKSEDCKV…SAKLKEEGNE (125 aa)) are disordered. The span at 88 to 98 (SSSELDEEYLI) shows a compositional bias: acidic residues. Phosphoserine is present on Ser-90. A compositionally biased stretch (basic and acidic residues) spans 99–125 (ELEKNMPEEEKQKRREESAKLKEEGNE). TPR repeat units follow at residues 116 to 149 (SAKLKEEGNERFKRGDYMEAESSYSQALQMCPAC), 155 to 188 (SVLFSNRAAARMKQDKKETAITDCSKAIQLNPTY), and 189 to 222 (IRAILRRAELYEKTDKLDEALEDYKSVLEKDPSV).

As to quaternary structure, interacts with the GAP domain of NF1. Interacts (via TPR repeats) with HSP90AA1 and HSPA8.

The polypeptide is Tetratricopeptide repeat protein 1 (Ttc1) (Mus musculus (Mouse)).